The following is a 227-amino-acid chain: Orotidine 5'-phosphate decarboxylase (227 aa).

Residues D12, K34, 61–70, T117, R178, Q187, G207, and R208 each bind substrate; that span reads DLKLHDIPNT. K63 serves as the catalytic Proton donor.

It belongs to the OMP decarboxylase family. Type 1 subfamily. Homodimer.

It catalyses the reaction orotidine 5'-phosphate + H(+) = UMP + CO2. It functions in the pathway pyrimidine metabolism; UMP biosynthesis via de novo pathway; UMP from orotate: step 2/2. In terms of biological role, catalyzes the decarboxylation of orotidine 5'-monophosphate (OMP) to uridine 5'-monophosphate (UMP). This chain is Orotidine 5'-phosphate decarboxylase, found in Anaeromyxobacter sp. (strain K).